The primary structure comprises 335 residues: UPF0324 membrane protein LMOf2365_2179 (335 aa).

Transmembrane regions (helical) follow at residues 10–28 (TFWYGIALTFCIATLSYFL), 33–55 (FLMILGQLVTAILIGIIIRALFP), 91–113 (AGWRVFLIAALCLSFGITIVYFL), 123–142 (LAILVACGTGICGAAAVVAI), 155–177 (VAATIIALLGTIFTVIYTLIYPI), 251–270 (VPWFIFGFLATSAINSFGII), 277–299 (FLVICAYFLIAMSMGGLGLNVHL), and 309–331 (PFAAALIGSVFLSAFGLALVLLF).

Belongs to the UPF0324 family.

The protein localises to the cell membrane. The chain is UPF0324 membrane protein LMOf2365_2179 from Listeria monocytogenes serotype 4b (strain F2365).